The sequence spans 600 residues: UvrABC system protein C (600 aa).

The region spanning 15-92 (EKPGCYLMKD…IKKYQPYYNV (78 aa)) is the GIY-YIG domain. The region spanning 197-232 (TSVKQDLTTKMEKASENLEFERAAEIRDQLKYIEET) is the UVR domain.

The protein belongs to the UvrC family. Interacts with UvrB in an incision complex.

It localises to the cytoplasm. Its function is as follows. The UvrABC repair system catalyzes the recognition and processing of DNA lesions. UvrC both incises the 5' and 3' sides of the lesion. The N-terminal half is responsible for the 3' incision and the C-terminal half is responsible for the 5' incision. This is UvrABC system protein C from Lactobacillus acidophilus (strain ATCC 700396 / NCK56 / N2 / NCFM).